Consider the following 621-residue polypeptide: UvrABC system protein C (621 aa).

One can recognise a GIY-YIG domain in the interval 20-98; that stretch reads TAPGVYRMYA…IKSLTPRYNV (79 aa). In terms of domain architecture, UVR spans 207–242; the sequence is DLLAEELIQAMQVASEHLEFEQAARLRDLLTSLRSM.

The protein belongs to the UvrC family. As to quaternary structure, interacts with UvrB in an incision complex.

It localises to the cytoplasm. Its function is as follows. The UvrABC repair system catalyzes the recognition and processing of DNA lesions. UvrC both incises the 5' and 3' sides of the lesion. The N-terminal half is responsible for the 3' incision and the C-terminal half is responsible for the 5' incision. This chain is UvrABC system protein C, found in Xylella fastidiosa (strain Temecula1 / ATCC 700964).